Here is a 662-residue protein sequence, read N- to C-terminus: Protein distal antenna (662 aa).

One can recognise an HTH psq-type domain in the interval 21–72; sequence TKGKRPLRHLTATDKIDAIQRIHDGESKASVARDIGVPESTLRGWCKNEEKL. A DNA-binding region (H-T-H motif) is located at residues 48–68; sequence KASVARDIGVPESTLRGWCKN. Disordered stretches follow at residues 265–299, 348–407, 491–537, and 558–596; these read RNARPKGNASQSPRASLPDSSGSGGGTPGDKSTPS, YSQM…PEDT, PEDL…DDEV, and QSSPGPVATAPSPLSPSSSTHENGHATPTPLADDLKSTC. Positions 349-391 are enriched in low complexity; that stretch reads SQMPRPSSPQQPQSTPPTTTTTQQQQPQSSTPPTATPPIVSTP. Residues 511–520 are compositionally biased toward polar residues; the sequence is FNPSPSTSIK. The segment covering 527–536 has biased composition (acidic residues); it reads VDEDEDEDDE.

Homomers. Interacts with itself, danr, ey and dac to form a complex (or complexes) containing the RD factors.

The protein localises to the nucleus. Its function is as follows. Probable transcription factor with a role in the retinal determination (RD) network. Contributes to differentiation of antenna-specific characteristics. This chain is Protein distal antenna, found in Culex quinquefasciatus (Southern house mosquito).